A 296-amino-acid chain; its full sequence is Ribosomal RNA small subunit methyltransferase A (296 aa).

The S-adenosyl-L-methionine site is built by Asn32, Leu34, Gly59, Glu80, Asp105, and Asn130.

Belongs to the class I-like SAM-binding methyltransferase superfamily. rRNA adenine N(6)-methyltransferase family. RsmA subfamily.

The protein resides in the cytoplasm. The enzyme catalyses adenosine(1518)/adenosine(1519) in 16S rRNA + 4 S-adenosyl-L-methionine = N(6)-dimethyladenosine(1518)/N(6)-dimethyladenosine(1519) in 16S rRNA + 4 S-adenosyl-L-homocysteine + 4 H(+). In terms of biological role, specifically dimethylates two adjacent adenosines (A1518 and A1519) in the loop of a conserved hairpin near the 3'-end of 16S rRNA in the 30S particle. May play a critical role in biogenesis of 30S subunits. This Levilactobacillus brevis (strain ATCC 367 / BCRC 12310 / CIP 105137 / JCM 1170 / LMG 11437 / NCIMB 947 / NCTC 947) (Lactobacillus brevis) protein is Ribosomal RNA small subunit methyltransferase A.